The primary structure comprises 200 residues: Holliday junction branch migration complex subunit RuvA (200 aa).

The domain I stretch occupies residues 1–63 (MIALVQGRVA…EDSLTLFGFA (63 aa)). Residues 64–138 (DADERDVFEL…DRLGPAQGAA (75 aa)) are domain II. Positions 138–142 (APAAP) are flexible linker. The interval 143–200 (VAVDDGADVVDALVGLGWPVRQAQDAVRGVLEDADGTAPDAAGLLRAALRSLAGDARG) is domain III.

Belongs to the RuvA family. In terms of assembly, homotetramer. Forms an RuvA(8)-RuvB(12)-Holliday junction (HJ) complex. HJ DNA is sandwiched between 2 RuvA tetramers; dsDNA enters through RuvA and exits via RuvB. An RuvB hexamer assembles on each DNA strand where it exits the tetramer. Each RuvB hexamer is contacted by two RuvA subunits (via domain III) on 2 adjacent RuvB subunits; this complex drives branch migration. In the full resolvosome a probable DNA-RuvA(4)-RuvB(12)-RuvC(2) complex forms which resolves the HJ.

It is found in the cytoplasm. The RuvA-RuvB-RuvC complex processes Holliday junction (HJ) DNA during genetic recombination and DNA repair, while the RuvA-RuvB complex plays an important role in the rescue of blocked DNA replication forks via replication fork reversal (RFR). RuvA specifically binds to HJ cruciform DNA, conferring on it an open structure. The RuvB hexamer acts as an ATP-dependent pump, pulling dsDNA into and through the RuvAB complex. HJ branch migration allows RuvC to scan DNA until it finds its consensus sequence, where it cleaves and resolves the cruciform DNA. This is Holliday junction branch migration complex subunit RuvA from Beutenbergia cavernae (strain ATCC BAA-8 / DSM 12333 / CCUG 43141 / JCM 11478 / NBRC 16432 / NCIMB 13614 / HKI 0122).